A 287-amino-acid polypeptide reads, in one-letter code: 4-diphosphocytidyl-2-C-methyl-D-erythritol kinase (287 aa).

The active site involves lysine 12. 95-105 lines the ATP pocket; the sequence is PAQAGMGGGSS. Residue aspartate 137 is part of the active site.

It belongs to the GHMP kinase family. IspE subfamily.

The catalysed reaction is 4-CDP-2-C-methyl-D-erythritol + ATP = 4-CDP-2-C-methyl-D-erythritol 2-phosphate + ADP + H(+). The protein operates within isoprenoid biosynthesis; isopentenyl diphosphate biosynthesis via DXP pathway; isopentenyl diphosphate from 1-deoxy-D-xylulose 5-phosphate: step 3/6. Functionally, catalyzes the phosphorylation of the position 2 hydroxy group of 4-diphosphocytidyl-2C-methyl-D-erythritol. The protein is 4-diphosphocytidyl-2-C-methyl-D-erythritol kinase of Delftia acidovorans (strain DSM 14801 / SPH-1).